A 309-amino-acid chain; its full sequence is Bifunctional methylenetetrahydrofolate dehydrogenase/cyclohydrolase, mitochondrial (309 aa).

Belongs to the tetrahydrofolate dehydrogenase/cyclohydrolase family. Homodimer. It depends on Mg(2+) as a cofactor.

The protein localises to the mitochondrion. The enzyme catalyses (6R)-5,10-methylene-5,6,7,8-tetrahydrofolate + NAD(+) = (6R)-5,10-methenyltetrahydrofolate + NADH. It catalyses the reaction (6R)-5,10-methenyltetrahydrofolate + H2O = (6R)-10-formyltetrahydrofolate + H(+). Functionally, may play a role in spermatogenesis. In Drosophila melanogaster (Fruit fly), this protein is Bifunctional methylenetetrahydrofolate dehydrogenase/cyclohydrolase, mitochondrial (Nmdmc).